The following is a 487-amino-acid chain: Complement C1r subcomponent-like protein (487 aa).

An N-terminal signal peptide occupies residues 1 to 35 (MPGPRVWGKYLWRSPHSKGCPGAMWWLLLWGVLQA). The CUB domain maps to 39 to 163 (RGSVLLAQEL…KGFLALYQTV (125 aa)). A disulfide bridge connects residues Cys-94 and Cys-112. N-linked (GlcNAc...) asparagine glycosylation is found at Asn-147 and Asn-166. The Sushi domain occupies 165–230 (VNYSQPISEA…DGEEVLQCMP (66 aa)). An intrachain disulfide couples Cys-195 to Cys-228. A glycan (N-linked (GlcNAc...) (complex) asparagine) is linked at Asn-242. The Peptidase S1 domain occupies 245–484 (TLGSSRAKLG…YVDWIKGVMN (240 aa)). The active-site Charge relay system is the His-283. N-linked (GlcNAc...) asparagine glycosylation is present at Asn-296. Residue Asp-339 is the Charge relay system of the active site. Asn-363 is a glycosylation site (N-linked (GlcNAc...) asparagine). 2 cysteine pairs are disulfide-bonded: Cys-402/Cys-421 and Cys-432/Cys-462. Catalysis depends on Ser-436, which acts as the Charge relay system.

Belongs to the peptidase S1 family. In terms of tissue distribution, highly expressed in placenta, liver, kidney, pancreas, moderately in lung, spleen, prostate, ovary, colon, and PBL, and weakly in heart, skeletal muscle, thymus, testis, and small intestine. Expressed in PC-3 (prostate adenocarcinoma) and SK-OV-3 (ovary adenocarcinoma) cells, but not in LoVo and HT-29 (colon adenocarcinoma), SMMC7721 (hepatocellular carcinoma), CaoV-3 (ovary adenocarcinoma), HeLa (cervix epithelioid carcinoma), MCF-7 (breast adenocarcinoma), U-251MG (glioma) or A-549 (lung carcinoma) cells. Widely expressed in myeloid leukemia cell lines, including K-562 (chronic myelogenous leukemia), THP-1 (myelomonocytic leukemia), HL-60 and NB4 (promyelocytic leukemia), and KG-1 (acute myelogenous leukemia) cells. Expressed mainly in the liver and in serum (at protein level).

It is found in the secreted. Its function is as follows. Mediates the proteolytic cleavage of HP/haptoglobin in the endoplasmic reticulum. This is Complement C1r subcomponent-like protein (C1RL) from Homo sapiens (Human).